A 320-amino-acid polypeptide reads, in one-letter code: Retron Ec86 reverse transcriptase (320 aa).

Residues 34 to 248 form the Reverse transcriptase domain; the sequence is VETLRLLIYT…SQRKVTGLVI (215 aa). Positions 119, 197, and 198 each coordinate Mg(2+). Positions 230–320 are necessary and required for recognition and binding of RNA; the sequence is KKTCISGPRS…GKNPLNKAKT (91 aa).

This sequence belongs to the bacterial reverse transcriptase family.

It catalyses the reaction DNA(n) + a 2'-deoxyribonucleoside 5'-triphosphate = DNA(n+1) + diphosphate. Its function is as follows. Reverse transcriptase (RT) component of antiviral defense system retron Ec86, composed of a non-coding RNA (ncRNA), a ribosyltransferase/DNA-binding protein and this RT. Expression of the 3-gene retron confers protection against bacteriophage T5. At multiplicity of infection (MOI) of 0.02 cultures grow normally when infected with T5 without collapsing, at MOI 2 cultures enter growth stasis. Responsible for synthesis of msDNA (a branched molecule with RNA linked by a 2',5'-phosphodiester bond to ssDNA). The retron transcript serves as primer (from a conserved internal G residue) and template for the reaction, and codes for the RT. Recognizes only its cognate RNA as a primer template. Overexpression of the ncRNA and RT (without the ribosyltransferase), which leads to increased levels of msDNA, is mutagenic in vivo. This may be due to a mismatch in the msDNA stem which binds and sequesters MutS and/or MutL. The polypeptide is Retron Ec86 reverse transcriptase (Escherichia coli).